We begin with the raw amino-acid sequence, 165 residues long: UPF0178 protein Bphyt_5655 (165 aa).

Disordered stretches follow at residues 115–134 (LRGSGVDTGGPSAFSQRDSK) and 139–165 (ELDRWLSRQRPQPDASAPQSADEPPTE).

It belongs to the UPF0178 family.

In Paraburkholderia phytofirmans (strain DSM 17436 / LMG 22146 / PsJN) (Burkholderia phytofirmans), this protein is UPF0178 protein Bphyt_5655.